The primary structure comprises 492 residues: Forkhead box protein O6 (492 aa).

Disordered regions lie at residues 1 to 76, 163 to 235, 315 to 338, and 466 to 492; these read MAAK…EVGP, SWWM…ASPA, GAGL…APRP, and FNFD…WVPG. Residues 88–182 constitute a DNA-binding region (fork-head); that stretch reads WGNLSYADLI…KTGKTPRRRA (95 aa). A Phosphoserine modification is found at serine 184. Positions 192–203 are enriched in basic residues; it reads LRIKGKASKKKQ. Positions 225–235 are enriched in low complexity; sequence PAAAKWAASPA. A compositionally biased stretch (pro residues) spans 472 to 486; it reads LPPPPPGLAGAPPPN.

In terms of processing, phosphorylation of Ser-184 is be important in regulating the transacriptional activity.

Its subcellular location is the cytoplasm. The protein localises to the nucleus. Transcriptional activator. This is Forkhead box protein O6 (FOXO6) from Homo sapiens (Human).